Consider the following 369-residue polypeptide: Ferrochelatase (369 aa).

Fe cation is bound by residues H210 and E291.

The protein belongs to the ferrochelatase family.

The protein localises to the cytoplasm. It carries out the reaction heme b + 2 H(+) = protoporphyrin IX + Fe(2+). Its pathway is porphyrin-containing compound metabolism; protoheme biosynthesis; protoheme from protoporphyrin-IX: step 1/1. Catalyzes the ferrous insertion into protoporphyrin IX. The polypeptide is Ferrochelatase (Thioalkalivibrio sulfidiphilus (strain HL-EbGR7)).